The primary structure comprises 840 residues: Intracellular phospholipase A1 (840 aa).

Disordered stretches follow at residues 1–142 and 666–718; these read MSGS…RRRK and KKNK…AANA. The span at 26 to 39 shows a compositional bias: basic and acidic residues; sequence GKVKQKEKPKEKQM. The segment covering 97–111 has biased composition (low complexity); it reads SRPSGLPSNGNPGSS. Positions 564-827 constitute a DDHD domain; that stretch reads LEFKVKYLFA…ALFLANVLYC (264 aa). Basic and acidic residues predominate over residues 668–680; the sequence is NKDDKTADARSGG. Over residues 681–694 the composition is skewed to acidic residues; the sequence is DDENEDEDECDSDE.

This sequence belongs to the PA-PLA1 family.

It carries out the reaction 1,2-dihexadecanoyl-sn-glycero-3-phospho-(1D-myo-inositol) + H2O = 2-hexadecanoyl-sn-glycero-3-phospho-(1D-myo-inositol) + hexadecanoate + H(+). The catalysed reaction is a 1,2-diacyl-sn-glycero-3-phospho-L-serine + H2O = a 2-acyl-sn-glycero-3-phospho-L-serine + a fatty acid + H(+). The enzyme catalyses 1-hexadecanoyl-2-(9Z-octadecenoyl)-sn-glycero-3-phospho-L-serine + H2O = 2-(9Z-octadecenoyl)-sn-glycero-3-phospho-L-serine + hexadecanoate + H(+). It catalyses the reaction 1,2-di-(9Z-octadecenoyl)-sn-glycero-3-phosphocholine + H2O = (9Z-octadecenoyl)-sn-glycero-3-phosphocholine + (9Z)-octadecenoate + H(+). It carries out the reaction a 1,2-diacyl-sn-glycero-3-phosphocholine + H2O = a 1-acyl-sn-glycero-3-phosphocholine + a fatty acid + H(+). The catalysed reaction is 1,2-dihexadecanoyl-sn-glycero-3-phosphocholine + H2O = 1-hexadecanoyl-sn-glycero-3-phosphocholine + hexadecanoate + H(+). With respect to regulation, inhibited by E-6-bromomethylene-3-1-naphthalenyl-2H-tetrahydropyran-2-one (BEL) in vitro. Its function is as follows. Hydrolyzes the ester bond at the sn-1 position of glycerophospholipids and produces 2-acyl lysophospholipids, being phosphatidylinositol (PI) its major substrate. PI is a versatile lipid that not only serves as a structural component of cellular membranes, but also plays important roles in signal transduction through distinct phosphorylated derivatives of the inositol head group. Catalyzes the hydrolysis of phosphatidylcholine at sn-2 position in vitro. Regulates asymmetric division, an important property of stem cells in C.elegans, by controlling the subcellular localizations of beta-catenin. This chain is Intracellular phospholipase A1, found in Caenorhabditis elegans.